The following is a 326-amino-acid chain: RNA-binding motif protein, X-linked 2 (326 aa).

Residue Lys-8 forms a Glycyl lysine isopeptide (Lys-Gly) (interchain with G-Cter in SUMO2) linkage. The 79-residue stretch at Ala-36–Asn-114 folds into the RRM domain. A disordered region spans residues Ala-117–His-326. The residue at position 140 (Thr-140) is a Phosphothreonine. Phosphoserine is present on Ser-149. Residues Thr-157–Lys-172 are compositionally biased toward basic residues. A compositionally biased stretch (polar residues) spans Gly-177–Ala-190. Basic and acidic residues-rich tracts occupy residues Thr-191–Ala-200, Lys-207–Glu-219, Ala-236–Ala-245, and Lys-255–Arg-273. The residue at position 274 (Ser-274) is a Phosphoserine. The span at His-291 to Ser-312 shows a compositional bias: basic residues. Residues Arg-313 to His-326 show a composition bias toward basic and acidic residues.

Belongs to the IST3 family. As to quaternary structure, part of the activated spliceosome B/catalytic step 1 spliceosome, one of the forms of the spliceosome which has a well-formed active site but still cannot catalyze the branching reaction and is composed of at least 52 proteins, the U2, U5 and U6 snRNAs and the pre-mRNA. Component of the minor spliceosome, which splices U12-type introns.

It is found in the nucleus. In terms of biological role, involved in pre-mRNA splicing as component of the activated spliceosome. As a component of the minor spliceosome, involved in the splicing of U12-type introns in pre-mRNAs. The protein is RNA-binding motif protein, X-linked 2 (Rbmx2) of Mus musculus (Mouse).